The chain runs to 465 residues: Neuraminidase (465 aa).

Residues 1 to 11 (MLPSTIQTLTL) are Intravirion-facing. A helical transmembrane segment spans residues 12–34 (FLTSGGVLLSLYVSASLSYLLYS). The involved in apical transport and lipid raft association stretch occupies residues 13 to 35 (LTSGGVLLSLYVSASLSYLLYSD). Residues 35–465 (DILLRFSSKI…DTVTGVDMAL (431 aa)) are Virion surface-facing. The hypervariable stalk region stretch occupies residues 38–85 (LRFSSKITAPTMTLDCANASNVQAVNRSATKEMTFLLPEPEWTYPRLS). Asn-55 and Asn-63 each carry an N-linked (GlcNAc...) asparagine; by host glycan. Disulfide bonds link Cys-86–Cys-419, Cys-121–Cys-126, Cys-181–Cys-228, Cys-230–Cys-235, Cys-276–Cys-290, Cys-278–Cys-288, Cys-317–Cys-336, and Cys-423–Cys-446. Positions 88–465 (GSTFQKALLI…DTVTGVDMAL (378 aa)) are head of neuraminidase. Position 115 (Arg-115) interacts with substrate. Asn-143 carries an N-linked (GlcNAc...) asparagine; by host glycan. The active-site Proton donor/acceptor is the Asp-148. Arg-149 contacts substrate. Position 274-275 (274-275 (EE)) interacts with substrate. Asn-283 carries an N-linked (GlcNAc...) asparagine; by host glycan. Arg-291 lines the substrate pocket. Residues Asp-292 and Asp-323 each coordinate Ca(2+). Positions 328-347 (DDGSITGPCESDGDKGRGGI) are disordered. A substrate-binding site is contributed by Arg-373. Tyr-408 functions as the Nucleophile in the catalytic mechanism.

Belongs to the glycosyl hydrolase 34 family. In terms of assembly, homotetramer. It depends on Ca(2+) as a cofactor. Post-translationally, N-glycosylated.

The protein localises to the virion membrane. Its subcellular location is the host apical cell membrane. It catalyses the reaction Hydrolysis of alpha-(2-&gt;3)-, alpha-(2-&gt;6)-, alpha-(2-&gt;8)- glycosidic linkages of terminal sialic acid residues in oligosaccharides, glycoproteins, glycolipids, colominic acid and synthetic substrates.. With respect to regulation, inhibited by the neuraminidase inhibitors zanamivir (Relenza) and oseltamivir (Tamiflu). These drugs interfere with the release of progeny virus from infected cells and are effective against all influenza strains. Resistance to neuraminidase inhibitors is quite rare. Its function is as follows. Catalyzes the removal of terminal sialic acid residues from viral and cellular glycoconjugates. Cleaves off the terminal sialic acids on the glycosylated HA during virus budding to facilitate virus release. Additionally helps virus spread through the circulation by further removing sialic acids from the cell surface. These cleavages prevent self-aggregation and ensure the efficient spread of the progeny virus from cell to cell. Otherwise, infection would be limited to one round of replication. Described as a receptor-destroying enzyme because it cleaves a terminal sialic acid from the cellular receptors. May facilitate viral invasion of the upper airways by cleaving the sialic acid moieties on the mucin of the airway epithelial cells. Likely to plays a role in the budding process through its association with lipid rafts during intracellular transport. May additionally display a raft-association independent effect on budding. Plays a role in the determination of host range restriction on replication and virulence. Sialidase activity in late endosome/lysosome traffic seems to enhance virus replication. The protein is Neuraminidase of Influenza B virus (strain B/Memphis/3/1989).